The following is a 489-amino-acid chain: Ubiquitin carboxyl-terminal hydrolase 14 (489 aa).

The USP domain maps to C102 to R458. C111 acts as the Nucleophile in catalysis. Catalysis depends on H409, which acts as the Proton acceptor. A disordered region spans residues P467–Q489.

This sequence belongs to the peptidase C19 family. USP14/UBP6 subfamily.

The catalysed reaction is Thiol-dependent hydrolysis of ester, thioester, amide, peptide and isopeptide bonds formed by the C-terminal Gly of ubiquitin (a 76-residue protein attached to proteins as an intracellular targeting signal).. Proteasome-associated deubiquitinase which releases ubiquitin from the proteasome targeted ubiquitinated proteins. Ensures the regeneration of ubiquitin at the proteasome. This Caenorhabditis elegans protein is Ubiquitin carboxyl-terminal hydrolase 14 (usp-14).